Here is a 208-residue protein sequence, read N- to C-terminus: Ribosomal RNA large subunit methyltransferase E (208 aa).

5 residues coordinate S-adenosyl-L-methionine: Gly-63, Trp-65, Asp-83, Asp-99, and Asp-124. The Proton acceptor role is filled by Lys-164.

The protein belongs to the class I-like SAM-binding methyltransferase superfamily. RNA methyltransferase RlmE family.

It is found in the cytoplasm. It catalyses the reaction uridine(2552) in 23S rRNA + S-adenosyl-L-methionine = 2'-O-methyluridine(2552) in 23S rRNA + S-adenosyl-L-homocysteine + H(+). Functionally, specifically methylates the uridine in position 2552 of 23S rRNA at the 2'-O position of the ribose in the fully assembled 50S ribosomal subunit. The polypeptide is Ribosomal RNA large subunit methyltransferase E (Enterobacter sp. (strain 638)).